We begin with the raw amino-acid sequence, 127 residues long: Fluoride-specific ion channel FluC (127 aa).

The next 4 membrane-spanning stretches (helical) occupy residues 4 to 24 (LLLA…LLSM), 35 to 55 (LGTL…FAWF), 71 to 91 (TGFC…VFLL), and 103 to 123 (VFVN…LFSA). Na(+) is bound by residues Gly-75 and Thr-78.

The protein belongs to the fluoride channel Fluc/FEX (TC 1.A.43) family.

The protein localises to the cell inner membrane. It carries out the reaction fluoride(in) = fluoride(out). Na(+) is not transported, but it plays an essential structural role and its presence is essential for fluoride channel function. Fluoride-specific ion channel. Important for reducing fluoride concentration in the cell, thus reducing its toxicity. The sequence is that of Fluoride-specific ion channel FluC from Escherichia coli O7:K1 (strain IAI39 / ExPEC).